The sequence spans 133 residues: DNA-binding protein inhibitor ID-2-A (133 aa).

In terms of domain architecture, bHLH spans 23–75 (ARSKTPVDDPMSLLYNMNDCYSKLKELVPSIPQNKKVSKMEILQHVIDYILDL). A Nuclear export signal motif is present at residues 106–115 (LNTDISILSL).

As to quaternary structure, heterodimer with other HLH proteins. In the embryo, expressed in a range of tissues, with primary expression in the developing pronephros; expressed in the pronephric anlage, and by the swimming tadpole stages expressed robustly in the pronephric tubules and weakly in the pronephric duct. Expressed in the secondary heart field. In the developing nervous system, expressed in the neural crest and in the neural folds during neurula stages, and at stage 20 in the neural tube, ventral mesoderm and mid-hindbrain boundary. By early tailbud stages, expressed in the neural tube, somites and branchial arches. In tadpoles (stage 37/38), expressed in the heart, eye, otic vesicle, somites and branchial arches. Also expressed in migrating muscle cells. Expressed at a low level in limbs, with expression decreasing as limbs develop, but expressed at a high level in blastemas (regenerated limbs), where expression is localized primarily to the blastemal epidermis. Widely expressed in adults with highest expression in the spleen, skin, intestine and brain, and at a much lower level in testis and heart.

It is found in the cytoplasm. The protein resides in the nucleus. Functionally, transcriptional regulator (lacking a basic DNA binding domain) which negatively regulates the basic helix-loop-helix (bHLH) transcription factors by forming heterodimers and inhibiting their DNA binding and transcriptional activity. Inhibits the activity of both neurogenic (neurod1/neuroD) and myogenic (myod1/myoD) bHLH factors. May play a role in the regulation of the circadian clock. This is DNA-binding protein inhibitor ID-2-A (id2-a) from Xenopus laevis (African clawed frog).